Reading from the N-terminus, the 449-residue chain is Protein phosphatase fem-2 (449 aa).

An interaction with fem-1 and fem-3 region spans residues 28 to 34 (EEAFADE). An interaction with fem-3 region spans residues 54–56 (IRF). Residues 160 to 424 (GIHVSGDQLK…DNVSVVIGFL (265 aa)) enclose the PPM-type phosphatase domain. Mg(2+) contacts are provided by Asp202, Gly203, Asp370, and Asp415.

The protein belongs to the PP2C family. As to quaternary structure, component of a complex containing fem-1, fem-2 and fem-3. Interacts (via N-terminus) with fem-1 and fem-3. Component of the CBC(fem-1) E3 ubiquitin-protein ligase complex, at least composed of cul-2, elc-1, tra-1, fem-1, fem-2 and fem-3; mediates the ubiquitination and subsequent proteasomal degradation of tra-1. Interacts with tra-1. Interacts with sel-10. It depends on Mg(2+) as a cofactor. Requires Mn(2+) as cofactor.

The enzyme catalyses O-phospho-L-seryl-[protein] + H2O = L-seryl-[protein] + phosphate. It carries out the reaction O-phospho-L-threonyl-[protein] + H2O = L-threonyl-[protein] + phosphate. In terms of biological role, dephosphorylates auto-phosphorylated Ca(2+)/calmodulin-dependent protein kinase unc-43/CAMKII in vitro. Involved in the regulation of sex determination. Together with fem-3, required for male sexual development by promoting the proteasomal-mediated degradation of tra-1, a transcription repressor of male-specific genes. Promotes apoptosis. The polypeptide is Protein phosphatase fem-2 (Caenorhabditis elegans).